The primary structure comprises 607 residues: Large ribosomal subunit assembly factor BipA (607 aa).

The tr-type G domain maps to 3–198 (EKLRNIAIIA…AIVDHVPAPD (196 aa)). Residues 15–20 (DHGKTT) and 128–131 (NKVD) each bind GTP.

This sequence belongs to the TRAFAC class translation factor GTPase superfamily. Classic translation factor GTPase family. BipA subfamily. Monomer.

It localises to the cytoplasm. It carries out the reaction GTP + H2O = GDP + phosphate + H(+). In terms of biological role, a 50S ribosomal subunit assembly protein with GTPase activity, required for 50S subunit assembly at low temperatures, may also play a role in translation. Binds GTP and analogs. Binds the 70S ribosome between the 30S and 50S subunits, in a similar position as ribosome-bound EF-G; it contacts a number of ribosomal proteins, both rRNAs and the A-site tRNA. The protein is Large ribosomal subunit assembly factor BipA of Shigella flexneri.